We begin with the raw amino-acid sequence, 288 residues long: Sulfhydrogenase 2 subunit gamma (288 aa).

In terms of domain architecture, FAD-binding FR-type spans 4–103 (YRSYDARIIE…RGPYGNGFPM (100 aa)). Positions 250, 255, 258, and 270 each coordinate [2Fe-2S] cluster.

Dimer of heterotetramer of alpha, beta, gamma and delta subunits. The nickel-containing alpha and delta subunits constitute the hydrogenase activity. The beta and gamma subunits (flavin-containing dimer) constitute the sulfur reductase activity. The cofactor is FAD. It depends on [2Fe-2S] cluster as a cofactor.

The protein localises to the cytoplasm. The catalysed reaction is n sulfur + H2 = (n-1) sulfur + hydrogen sulfide + H(+). Its function is as follows. Part of a bifunctional enzyme complex that functions as a hydrogen-evolving hydrogenase with sulfur-reducing activity. May play a role in hydrogen cycling during fermentative growth. Activity exhibited with NAD in addition to NADPH. The beta and gamma subunits form the sulfur-reducing component that catalyzes the cytoplasmic production of hydrogen sulfide in the presence of elemental sulfur. This Pyrococcus furiosus (strain ATCC 43587 / DSM 3638 / JCM 8422 / Vc1) protein is Sulfhydrogenase 2 subunit gamma.